A 315-amino-acid chain; its full sequence is Ribose-phosphate pyrophosphokinase (315 aa).

ATP-binding positions include 37 to 39 (DGE) and 96 to 97 (RQ). Mg(2+) is bound by residues His-131 and Asp-170. The active site involves Lys-194. Residues Arg-196, Asp-220, and 224 to 228 (DTGGT) contribute to the D-ribose 5-phosphate site.

Belongs to the ribose-phosphate pyrophosphokinase family. Class I subfamily. Homohexamer. Mg(2+) serves as cofactor.

Its subcellular location is the cytoplasm. The enzyme catalyses D-ribose 5-phosphate + ATP = 5-phospho-alpha-D-ribose 1-diphosphate + AMP + H(+). Its pathway is metabolic intermediate biosynthesis; 5-phospho-alpha-D-ribose 1-diphosphate biosynthesis; 5-phospho-alpha-D-ribose 1-diphosphate from D-ribose 5-phosphate (route I): step 1/1. Involved in the biosynthesis of the central metabolite phospho-alpha-D-ribosyl-1-pyrophosphate (PRPP) via the transfer of pyrophosphoryl group from ATP to 1-hydroxyl of ribose-5-phosphate (Rib-5-P). The polypeptide is Ribose-phosphate pyrophosphokinase (Shewanella oneidensis (strain ATCC 700550 / JCM 31522 / CIP 106686 / LMG 19005 / NCIMB 14063 / MR-1)).